Consider the following 117-residue polypeptide: Non-specific lipid-transfer protein 1 (117 aa).

The N-terminal stretch at 1 to 25 (MAGLVKLSCLVLACMIVAGPIATNA) is a signal peptide. Disulfide bonds link Cys-29-Cys-76, Cys-39-Cys-53, Cys-54-Cys-99, and Cys-74-Cys-113.

This sequence belongs to the plant LTP family.

Functionally, plant non-specific lipid-transfer proteins transfer phospholipids as well as galactolipids across membranes. May play a role in wax or cutin deposition in the cell walls of expanding epidermal cells and certain secretory tissues. This chain is Non-specific lipid-transfer protein 1 (LTP1), found in Brassica napus (Rape).